The sequence spans 216 residues: GTP cyclohydrolase-2 (216 aa).

50–54 (RIHSE) contacts GTP. Positions 55, 66, and 68 each coordinate Zn(2+). GTP is bound by residues Q71, 93 to 95 (EGR), and T115. D127 (proton acceptor) is an active-site residue. The Nucleophile role is filled by R129. T150 and K155 together coordinate GTP.

The protein belongs to the GTP cyclohydrolase II family. Zn(2+) is required as a cofactor.

The enzyme catalyses GTP + 4 H2O = 2,5-diamino-6-hydroxy-4-(5-phosphoribosylamino)-pyrimidine + formate + 2 phosphate + 3 H(+). It functions in the pathway cofactor biosynthesis; riboflavin biosynthesis; 5-amino-6-(D-ribitylamino)uracil from GTP: step 1/4. Functionally, catalyzes the conversion of GTP to 2,5-diamino-6-ribosylamino-4(3H)-pyrimidinone 5'-phosphate (DARP), formate and pyrophosphate. The chain is GTP cyclohydrolase-2 from Histophilus somni (strain 129Pt) (Haemophilus somnus).